Here is a 351-residue protein sequence, read N- to C-terminus: UDP-3-O-acylglucosamine N-acyltransferase (351 aa).

His240 functions as the Proton acceptor in the catalytic mechanism.

This sequence belongs to the transferase hexapeptide repeat family. LpxD subfamily. In terms of assembly, homotrimer.

It carries out the reaction a UDP-3-O-[(3R)-3-hydroxyacyl]-alpha-D-glucosamine + a (3R)-hydroxyacyl-[ACP] = a UDP-2-N,3-O-bis[(3R)-3-hydroxyacyl]-alpha-D-glucosamine + holo-[ACP] + H(+). The protein operates within bacterial outer membrane biogenesis; LPS lipid A biosynthesis. Catalyzes the N-acylation of UDP-3-O-acylglucosamine using 3-hydroxyacyl-ACP as the acyl donor. Is involved in the biosynthesis of lipid A, a phosphorylated glycolipid that anchors the lipopolysaccharide to the outer membrane of the cell. This chain is UDP-3-O-acylglucosamine N-acyltransferase, found in Pseudomonas savastanoi pv. phaseolicola (strain 1448A / Race 6) (Pseudomonas syringae pv. phaseolicola (strain 1448A / Race 6)).